The primary structure comprises 2197 residues: Protein sickie (2197 aa).

Positions 21 to 129 (RDYAEIYTDW…LFFALSRFKQ (109 aa)) constitute a Calponin-homology (CH) domain. 7 disordered regions span residues 165–197 (GLRT…QLAQ), 235–311 (CPPD…PQKH), 331–646 (AASV…NKFH), 730–767 (GSSP…SPGK), 788–910 (RNSR…FGYV), 1094–1119 (GPGQ…NRSN), and 1202–1223 (TAAG…GLVG). Residues 175 to 197 (QDKNQQEQQQQQQQQQTPQQLAQ) show a composition bias toward low complexity. Residues 261–290 (SDFNTSRPNSPPTSNHTIQSLKSGNNNSLR) show a composition bias toward polar residues. Low complexity predominate over residues 291 to 304 (PPSIKSGIPSPSSP). Residues 331-341 (AASVASKTQIQ) are compositionally biased toward polar residues. Low complexity-rich tracts occupy residues 342 to 354 (SKRT…FSSA) and 379 to 398 (SVSS…LAAQ). The span at 399 to 428 (QKKEQANKATKLDKKEKSPARSLNKEESGN) shows a compositional bias: basic and acidic residues. Polar residues-rich tracts occupy residues 429-441 (ESRS…TGKS), 561-570 (ANSQPTSHIS), 577-588 (EPSTPQHSSGIY), and 633-644 (SAPNTPTASPNK). 3 stretches are compositionally biased toward low complexity: residues 755-766 (GPSSSAGGISPG), 796-831 (SIGT…NNNN), and 887-904 (SSSK…KGVP). The span at 1100–1119 (GQMSGNESPYVQSPRMNRSN) shows a compositional bias: polar residues. Residues 1262 to 1342 (YGNAEERQAH…RQTIELLRKQ (81 aa)) are a coiled coil. Disordered regions lie at residues 1373-1415 (QALG…SMCS) and 1455-1511 (KTSR…SPAK). Polar residues-rich tracts occupy residues 1379–1399 (GSDQ…NNGS) and 1406–1415 (RQHSTDSMCS). A compositionally biased stretch (basic residues) spans 1455–1468 (KTSRHVGHHHHHNH). The stretch at 1556 to 1591 (SSASQLESLKEMMNKMRAEMMSLKHNNERLQKLVTT) forms a coiled coil. Disordered stretches follow at residues 1600–1633 (SLGQ…PPME), 1648–1690 (CLPP…EAAP), and 2172–2197 (SEAQ…AGAE). Residues 1603–1616 (QAISPNGSVAGSSE) show a composition bias toward polar residues. A compositionally biased stretch (pro residues) spans 1650–1663 (PPAPAPEQPPPPAP). Over residues 2184-2197 (LDSNVTPESSAGAE) the composition is skewed to polar residues.

Belongs to the Nav/unc-53 family.

Required for the immune deficiency pathway, which mediates responses to Gram-negative bacterial infection. Favors Rel activation and nuclear translocation. The sequence is that of Protein sickie (sick) from Drosophila melanogaster (Fruit fly).